Here is a 475-residue protein sequence, read N- to C-terminus: Ankyrin repeat, SAM and basic leucine zipper domain-containing protein 1 (475 aa).

A disordered region spans residues 1 to 24; it reads MAAAVQRGLPVAGGGESSESEDDG. A phosphoserine mark is found at S17, S18, and S20. 6 ANK repeats span residues 45–74, 78–107, 110–144, 148–177, 181–210, and 214–243; these read EKNE…SVES, YGWT…NASF, DKHT…DPNV, RLMT…EVNA, NGYT…NKML, and DGKT…PLEG. The SAM domain occupies 272-334; the sequence is SYAAFGDLEI…KILAALKELA (63 aa).

In terms of assembly, interacts with DDX4, PIWIL1, RANBP9 and TDRD1.

The protein localises to the cytoplasm. Functionally, plays a central role during spermatogenesis by repressing transposable elements and preventing their mobilization, which is essential for the germline integrity. Acts via the piRNA metabolic process, which mediates the repression of transposable elements during meiosis by forming complexes composed of piRNAs and Piwi proteins and governs the methylation and subsequent repression of transposons. Its association with pi-bodies suggests a participation in the primary piRNAs metabolic process. Required prior to the pachytene stage to facilitate the production of multiple types of piRNAs, including those associated with repeats involved in the regulation of retrotransposons. May act by mediating protein-protein interactions during germ cell maturation. The polypeptide is Ankyrin repeat, SAM and basic leucine zipper domain-containing protein 1 (ASZ1) (Loxodonta africana (African elephant)).